Consider the following 114-residue polypeptide: NADH-ubiquinone oxidoreductase chain 3 (114 aa).

3 helical membrane-spanning segments follow: residues Leu3–Tyr23, Ile52–Leu72, and Thr86–Leu106.

Belongs to the complex I subunit 3 family.

It localises to the mitochondrion membrane. It carries out the reaction a ubiquinone + NADH + 5 H(+)(in) = a ubiquinol + NAD(+) + 4 H(+)(out). Its function is as follows. Core subunit of the mitochondrial membrane respiratory chain NADH dehydrogenase (Complex I) that is believed to belong to the minimal assembly required for catalysis. Complex I functions in the transfer of electrons from NADH to the respiratory chain. The immediate electron acceptor for the enzyme is believed to be ubiquinone. The sequence is that of NADH-ubiquinone oxidoreductase chain 3 (MT-ND3) from Lycodon semicarinatus (Ryukyu odd-tooth snake).